We begin with the raw amino-acid sequence, 479 residues long: Zinc metalloproteinase/disintegrin (479 aa).

An N-terminal signal peptide occupies residues 1–20 (MIQVLLVTICLAAFPYQGSS). Residues 21–187 (IILESGKVND…PIKKASQLIV (167 aa)) constitute a propeptide that is removed on maturation. One can recognise a Peptidase M12B domain in the interval 193–390 (RYMEIVIVVD…ENPPCILNKP (198 aa)). Ca(2+) contacts are provided by Glu196 and Asp280. Cystine bridges form between Cys304–Cys385, Cys344–Cys369, and Cys346–Cys352. His329 serves as a coordination point for Zn(2+). The active site involves Glu330. Zn(2+) contacts are provided by His333 and His339. 2 residues coordinate Ca(2+): Cys385 and Asn388. Residues 390–414 (PLRTDTVSTPVSGNELLEAGKDYDR) constitute a propeptide that is removed on maturation. Positions 398-479 (TPVSGNELLE…ADCPRNPYHA (82 aa)) constitute a Disintegrin domain. Intrachain disulfides connect Cys435–Cys441, Cys440–Cys465, and Cys453–Cys472. Positions 457–459 (RGD) match the Cell attachment site motif.

This sequence belongs to the venom metalloproteinase (M12B) family. P-II subfamily. P-IIa sub-subfamily. As to quaternary structure, monomer. Zn(2+) serves as cofactor. In terms of tissue distribution, expressed by the venom gland.

Its subcellular location is the secreted. Its function is as follows. Snake venom metalloproteinase that impairs hemostasis in the envenomed animal. Inhibits platelet aggregation induced by ADP, thrombin, platelet-activating factor and collagen. Acts by inhibiting fibrinogen interaction with platelet receptors GPIIb/GPIIIa (ITGA2B/ITGB3). In Deinagkistrodon acutus (Hundred-pace snake), this protein is Zinc metalloproteinase/disintegrin.